The following is a 355-amino-acid chain: Holliday junction branch migration complex subunit RuvB (355 aa).

The segment at 1 to 193 (MGRFSEDSAD…FGFTAHMDFY (193 aa)) is large ATPase domain (RuvB-L). Residues leucine 32, arginine 33, glycine 74, lysine 77, threonine 78, serine 79, 140–142 (EDF), arginine 183, tyrosine 193, and arginine 230 contribute to the ATP site. Threonine 78 contacts Mg(2+). The tract at residues 194 to 264 (EPSELERVLA…IAKYALEVYD (71 aa)) is small ATPAse domain (RuvB-S). Residues 267–355 (ELGLDRLDRA…VGLGQTGLFD (89 aa)) are head domain (RuvB-H). Residues arginine 322 and arginine 327 each contribute to the DNA site.

This sequence belongs to the RuvB family. In terms of assembly, homohexamer. Forms an RuvA(8)-RuvB(12)-Holliday junction (HJ) complex. HJ DNA is sandwiched between 2 RuvA tetramers; dsDNA enters through RuvA and exits via RuvB. An RuvB hexamer assembles on each DNA strand where it exits the tetramer. Each RuvB hexamer is contacted by two RuvA subunits (via domain III) on 2 adjacent RuvB subunits; this complex drives branch migration. In the full resolvosome a probable DNA-RuvA(4)-RuvB(12)-RuvC(2) complex forms which resolves the HJ.

It is found in the cytoplasm. The enzyme catalyses ATP + H2O = ADP + phosphate + H(+). Its function is as follows. The RuvA-RuvB-RuvC complex processes Holliday junction (HJ) DNA during genetic recombination and DNA repair, while the RuvA-RuvB complex plays an important role in the rescue of blocked DNA replication forks via replication fork reversal (RFR). RuvA specifically binds to HJ cruciform DNA, conferring on it an open structure. The RuvB hexamer acts as an ATP-dependent pump, pulling dsDNA into and through the RuvAB complex. RuvB forms 2 homohexamers on either side of HJ DNA bound by 1 or 2 RuvA tetramers; 4 subunits per hexamer contact DNA at a time. Coordinated motions by a converter formed by DNA-disengaged RuvB subunits stimulates ATP hydrolysis and nucleotide exchange. Immobilization of the converter enables RuvB to convert the ATP-contained energy into a lever motion, pulling 2 nucleotides of DNA out of the RuvA tetramer per ATP hydrolyzed, thus driving DNA branch migration. The RuvB motors rotate together with the DNA substrate, which together with the progressing nucleotide cycle form the mechanistic basis for DNA recombination by continuous HJ branch migration. Branch migration allows RuvC to scan DNA until it finds its consensus sequence, where it cleaves and resolves cruciform DNA. This chain is Holliday junction branch migration complex subunit RuvB, found in Mycolicibacterium vanbaalenii (strain DSM 7251 / JCM 13017 / BCRC 16820 / KCTC 9966 / NRRL B-24157 / PYR-1) (Mycobacterium vanbaalenii).